A 567-amino-acid polypeptide reads, in one-letter code: Pyruvate decarboxylase (567 aa).

Asp-28 and His-117 together coordinate pyruvate. Thiamine diphosphate-binding positions include Thr-393 and 416-418 (GSI). Asp-447 provides a ligand contact to Mg(2+). Residues 448–449 (GS) and 475–480 (NDGYTI) each bind thiamine diphosphate. Mg(2+)-binding residues include Asn-475 and Gly-477. Glu-481 provides a ligand contact to pyruvate.

It belongs to the TPP enzyme family. Homotetramer. Mg(2+) serves as cofactor. Requires thiamine diphosphate as cofactor.

The protein localises to the cytoplasm. It carries out the reaction a 2-oxocarboxylate + H(+) = an aldehyde + CO2. The catalysed reaction is pyruvate + H(+) = acetaldehyde + CO2. The chain is Pyruvate decarboxylase (PDC11) from Candida albicans (strain SC5314 / ATCC MYA-2876) (Yeast).